We begin with the raw amino-acid sequence, 142 residues long: D-aminoacyl-tRNA deacylase (142 aa).

The short motif at 133–134 (GP) is the Gly-cisPro motif, important for rejection of L-amino acids element.

It belongs to the DTD family. In terms of assembly, homodimer.

The protein resides in the cytoplasm. The catalysed reaction is glycyl-tRNA(Ala) + H2O = tRNA(Ala) + glycine + H(+). It catalyses the reaction a D-aminoacyl-tRNA + H2O = a tRNA + a D-alpha-amino acid + H(+). In terms of biological role, an aminoacyl-tRNA editing enzyme that deacylates mischarged D-aminoacyl-tRNAs. Also deacylates mischarged glycyl-tRNA(Ala), protecting cells against glycine mischarging by AlaRS. Acts via tRNA-based rather than protein-based catalysis; rejects L-amino acids rather than detecting D-amino acids in the active site. By recycling D-aminoacyl-tRNA to D-amino acids and free tRNA molecules, this enzyme counteracts the toxicity associated with the formation of D-aminoacyl-tRNA entities in vivo and helps enforce protein L-homochirality. In Acidothermus cellulolyticus (strain ATCC 43068 / DSM 8971 / 11B), this protein is D-aminoacyl-tRNA deacylase.